Consider the following 217-residue polypeptide: PTB-containing, cubilin and LRP1-interacting protein (217 aa).

Residues 60 to 217 enclose the PID domain; sequence VTYLGKVSTT…ASQELESDDG (158 aa). The segment at 194-217 is disordered; that stretch reads KSDGRIHRSSSSEEASQELESDDG. Phosphoserine is present on residues serine 202, serine 203, and serine 214. Over residues 208–217 the composition is skewed to acidic residues; sequence ASQELESDDG.

As to quaternary structure, found in a complex with PID1/PCLI1, LRP1 and CUBNI. Interacts with LRP1 and CUBN.

It is found in the cytoplasm. Increases proliferation of preadipocytes without affecting adipocytic differentiation. The protein is PTB-containing, cubilin and LRP1-interacting protein (Pid1) of Mus musculus (Mouse).